The primary structure comprises 400 residues: CCA-adding enzyme (400 aa).

2 residues coordinate ATP: Gly28 and Arg31. 2 residues coordinate CTP: Gly28 and Arg31. Mg(2+) is bound by residues Asp41 and Asp43. ATP-binding residues include Arg112, Asp155, Arg158, Arg161, and Arg164. Positions 112, 155, 158, 161, and 164 each coordinate CTP.

Belongs to the tRNA nucleotidyltransferase/poly(A) polymerase family. Bacterial CCA-adding enzyme type 3 subfamily. Homodimer. The cofactor is Mg(2+).

It carries out the reaction a tRNA precursor + 2 CTP + ATP = a tRNA with a 3' CCA end + 3 diphosphate. It catalyses the reaction a tRNA with a 3' CCA end + 2 CTP + ATP = a tRNA with a 3' CCACCA end + 3 diphosphate. In terms of biological role, catalyzes the addition and repair of the essential 3'-terminal CCA sequence in tRNAs without using a nucleic acid template. Adds these three nucleotides in the order of C, C, and A to the tRNA nucleotide-73, using CTP and ATP as substrates and producing inorganic pyrophosphate. tRNA 3'-terminal CCA addition is required both for tRNA processing and repair. Also involved in tRNA surveillance by mediating tandem CCA addition to generate a CCACCA at the 3' terminus of unstable tRNAs. While stable tRNAs receive only 3'-terminal CCA, unstable tRNAs are marked with CCACCA and rapidly degraded. The sequence is that of CCA-adding enzyme from Staphylococcus aureus (strain MSSA476).